A 399-amino-acid chain; its full sequence is Tryptophan synthase beta chain (399 aa).

Lysine 90 is modified (N6-(pyridoxal phosphate)lysine).

It belongs to the TrpB family. Tetramer of two alpha and two beta chains. It depends on pyridoxal 5'-phosphate as a cofactor.

The catalysed reaction is (1S,2R)-1-C-(indol-3-yl)glycerol 3-phosphate + L-serine = D-glyceraldehyde 3-phosphate + L-tryptophan + H2O. The protein operates within amino-acid biosynthesis; L-tryptophan biosynthesis; L-tryptophan from chorismate: step 5/5. Its function is as follows. The beta subunit is responsible for the synthesis of L-tryptophan from indole and L-serine. In Phocaeicola vulgatus (strain ATCC 8482 / DSM 1447 / JCM 5826 / CCUG 4940 / NBRC 14291 / NCTC 11154) (Bacteroides vulgatus), this protein is Tryptophan synthase beta chain.